An 89-amino-acid chain; its full sequence is Serine-rich and transmembrane domain-containing 2 (89 aa).

Asn11 carries an N-linked (GlcNAc...) asparagine glycan. A helical transmembrane segment spans residues 38-58 (YVGLFLSLLAILLILLFTMLL).

It localises to the membrane. The polypeptide is Serine-rich and transmembrane domain-containing 2 (Mus musculus (Mouse)).